A 174-amino-acid polypeptide reads, in one-letter code: MDNGLFIVVTIFVVNILYVTIYTVRLLLTMKGYRYLAALSSVFEMIIYVVALSLVLDNLNNIANVLAYAIGFGVGVIVGMKIEERIALGYITVNVITKEYNLDLPNQIRDLGYGVTSWIASGRDGERMMLEILTQRKNERKLYKQIIEIDNGAFIVSSEPKQIHGGFWIKQVRK.

3 helical membrane passes run 4 to 24, 36 to 56, and 62 to 82; these read GLFI…IYTV, LAAL…SLVL, and IANV…GMKI.

This sequence belongs to the UPF0316 family.

It is found in the cell membrane. This Listeria welshimeri serovar 6b (strain ATCC 35897 / DSM 20650 / CCUG 15529 / CIP 8149 / NCTC 11857 / SLCC 5334 / V8) protein is UPF0316 protein lwe1794.